Reading from the N-terminus, the 497-residue chain is Cobyric acid synthase (497 aa).

The 196-residue stretch at 250–445 (EVTIAVIRLP…LHGIFNNGPW (196 aa)) folds into the GATase cobBQ-type domain. Catalysis depends on Cys331, which acts as the Nucleophile. Residue His437 is part of the active site.

This sequence belongs to the CobB/CobQ family. CobQ subfamily.

It participates in cofactor biosynthesis; adenosylcobalamin biosynthesis. Catalyzes amidations at positions B, D, E, and G on adenosylcobyrinic A,C-diamide. NH(2) groups are provided by glutamine, and one molecule of ATP is hydrogenolyzed for each amidation. In Acaryochloris marina (strain MBIC 11017), this protein is Cobyric acid synthase.